The following is a 1642-amino-acid chain: Cortactin-binding protein 2 (1642 aa).

Disordered regions lie at residues 1–27, 203–222, 366–433, 446–471, and 491–611; these read MATD…AEAA, KKKT…RSTE, IGAS…HPGL, GSNA…SPTS, and RFTS…PSID. Positions 119–276 form a coiled coil; it reads RKMQERMSTQ…EQLKRGTDSK (158 aa). The span at 385–394 shows a compositional bias: polar residues; sequence GPSTGSTADL. Positions 395–407 are enriched in low complexity; it reads TSSPTPVPSTVSP. Arg-491 bears the Asymmetric dimethylarginine mark. Residues 497–506 are compositionally biased toward pro residues; it reads AGAPPRPGAP. Residues 576–586 show a composition bias toward polar residues; it reads TVASPPSTLPQ. ANK repeat units follow at residues 702–732, 736–765, 769–798, 802–831, 835–864, and 904–934; these read GRPT…DINY, DGHS…QVNV, NGFT…NINH, GGQT…DRSV, DGWT…PAHG, and EGWT…EPER. Residues 1440 to 1469 are disordered; that stretch reads ESGAWRKVSTSPRKKSGRFSSPTWNKPDLS. Ser-1513 is subject to Phosphoserine. Residues 1546–1642 form a disordered region; that stretch reads RRFDSSGNNP…NSRDLEPTQK (97 aa). Polar residues-rich tracts occupy residues 1552-1563 and 1571-1588; these read GNNPVFSATVNN and KEVS…SNSK. Positions 1613–1627 are enriched in low complexity; the sequence is SQNTKRSSSSSNTRQ.

As to quaternary structure, interacts with CTTN/cortactin SH3 domain. Interacts with STRN, STRN4/zinedin and MOB4/phocein; this interactions mediate the association with the STRIPAK core complex and may regulate dendritic spine distribution of the STRIPAK complex in hippocampal neurons. Activation of glutamate receptors weakens the interaction with STRN and STRN4.

Its subcellular location is the cytoplasm. It is found in the cell cortex. The protein resides in the cell projection. The protein localises to the dendritic spine. Functionally, regulates the dendritic spine distribution of CTTN/cortactin in hippocampal neurons, and thus controls dendritic spinogenesis and dendritic spine maintenance. Associates with the striatin-interacting phosphatase and kinase (STRIPAK) core complex to regulate dendritic spine distribution of the STRIPAK complex in hippocampal neurons. The protein is Cortactin-binding protein 2 (CTTNBP2) of Muntiacus reevesi (Reeves' muntjac).